We begin with the raw amino-acid sequence, 526 residues long: Tyrosine-protein kinase transforming protein Src (526 aa).

The interval 1-52 is disordered; the sequence is MGSSKSKPKDPSQRRHSLEPPDSTHHGGFPASQTPDETAAPDAHRNPSRSFG. G2 carries N-myristoyl glycine; by host lipidation. The span at 7–25 shows a compositional bias: basic and acidic residues; the sequence is KPKDPSQRRHSLEPPDSTH. SH3 domains lie at 71–139 and 81–142; these read TSPQ…YVAP and GGVT…PSDS. The SH2 domain maps to 148 to 245; it reads WYFGKITRRE…GLCHRLANVC (98 aa). In terms of domain architecture, Protein kinase spans 267 to 517; that stretch reads LRLEAKLGQG…TFKYLQAQLL (251 aa). ATP contacts are provided by residues 273–281 and K295; that span reads LGQGCFGEV. D386 functions as the Proton acceptor in the catalytic mechanism. Y416 bears the Phosphotyrosine; by autocatalysis mark.

Belongs to the protein kinase superfamily. Tyr protein kinase family. SRC subfamily. As to quaternary structure, homodimer. The phosphorylated form is termed pp60v-src.

It catalyses the reaction L-tyrosyl-[protein] + ATP = O-phospho-L-tyrosyl-[protein] + ADP + H(+). Functionally, this phosphoprotein, required for both the initiation and the maintenance of neoplastic transformation, is a protein kinase that catalyzes the phosphorylation of tyrosine residues in vitro. In Gallus gallus (Chicken), this protein is Tyrosine-protein kinase transforming protein Src (V-SRC).